Consider the following 161-residue polypeptide: UPF0303 protein Spro_1996 (161 aa).

It belongs to the UPF0303 family.

This Serratia proteamaculans (strain 568) protein is UPF0303 protein Spro_1996.